Here is a 352-residue protein sequence, read N- to C-terminus: N-acetyl-gamma-glutamyl-phosphate reductase (352 aa).

The active site involves cysteine 149.

It belongs to the NAGSA dehydrogenase family. Type 1 subfamily.

The protein resides in the cytoplasm. It carries out the reaction N-acetyl-L-glutamate 5-semialdehyde + phosphate + NADP(+) = N-acetyl-L-glutamyl 5-phosphate + NADPH + H(+). It participates in amino-acid biosynthesis; L-arginine biosynthesis; N(2)-acetyl-L-ornithine from L-glutamate: step 3/4. In terms of biological role, catalyzes the NADPH-dependent reduction of N-acetyl-5-glutamyl phosphate to yield N-acetyl-L-glutamate 5-semialdehyde. In Polynucleobacter asymbioticus (strain DSM 18221 / CIP 109841 / QLW-P1DMWA-1) (Polynucleobacter necessarius subsp. asymbioticus), this protein is N-acetyl-gamma-glutamyl-phosphate reductase.